The chain runs to 711 residues: Polyribonucleotide nucleotidyltransferase (711 aa).

Mg(2+) is bound by residues D486 and D492. One can recognise a KH domain in the interval 553–612 (PRIHTIKINPDKIKDVIGKGGSVIRALTEETGTTIEIEDDGTVKIAATDGEKAKHAIRRI). One can recognise an S1 motif domain in the interval 622-690 (GRVYNGKVTR…RQGRIRLSIK (69 aa)). Residues 690–711 (KEATEQSQPAAALEAPAAEQGE) are disordered. Residues 698–711 (PAAALEAPAAEQGE) are compositionally biased toward low complexity.

It belongs to the polyribonucleotide nucleotidyltransferase family. Component of the RNA degradosome, which is a multiprotein complex involved in RNA processing and mRNA degradation. Mg(2+) serves as cofactor.

Its subcellular location is the cytoplasm. It carries out the reaction RNA(n+1) + phosphate = RNA(n) + a ribonucleoside 5'-diphosphate. Involved in mRNA degradation. Catalyzes the phosphorolysis of single-stranded polyribonucleotides processively in the 3'- to 5'-direction. In Escherichia coli O127:H6 (strain E2348/69 / EPEC), this protein is Polyribonucleotide nucleotidyltransferase.